A 221-amino-acid polypeptide reads, in one-letter code: Cysteine-rich venom protein (221 aa).

A signal peptide is located at residue glycine 1. The SCP domain maps to 21-148 (DLHNSLRRSV…EYKYFYVCQY (128 aa)). 8 disulfide bridges follow: cysteine 57-cysteine 135, cysteine 74-cysteine 149, cysteine 130-cysteine 146, cysteine 168-cysteine 175, cysteine 171-cysteine 180, cysteine 184-cysteine 216, cysteine 193-cysteine 210, and cysteine 201-cysteine 214. The ShKT domain maps to 184–216 (CTHEDKFTNCKDLVKQGCNNNYLKTNCPASCSC).

The protein belongs to the CRISP family. As to expression, expressed by the venom gland.

The protein localises to the secreted. Functionally, blocks contraction of smooth muscle elicited by high potassium-induced depolarization, but does not block caffeine-stimulated contraction. May target voltage-gated calcium channels in smooth muscle. In Vipera nikolskii (Nikolsky's adder), this protein is Cysteine-rich venom protein.